We begin with the raw amino-acid sequence, 363 residues long: Heat-inducible transcription repressor HrcA (363 aa).

This sequence belongs to the HrcA family.

Negative regulator of class I heat shock genes (grpE-dnaK-dnaJ and groELS operons). Prevents heat-shock induction of these operons. In Afipia carboxidovorans (strain ATCC 49405 / DSM 1227 / KCTC 32145 / OM5) (Oligotropha carboxidovorans), this protein is Heat-inducible transcription repressor HrcA.